We begin with the raw amino-acid sequence, 486 residues long: Galactose-1-phosphate uridylyltransferase (486 aa).

It belongs to the galactose-1-phosphate uridylyltransferase type 2 family.

The protein localises to the cytoplasm. It carries out the reaction alpha-D-galactose 1-phosphate + UDP-alpha-D-glucose = alpha-D-glucose 1-phosphate + UDP-alpha-D-galactose. It functions in the pathway carbohydrate metabolism; galactose metabolism. This Lacticaseibacillus casei (Lactobacillus casei) protein is Galactose-1-phosphate uridylyltransferase.